We begin with the raw amino-acid sequence, 400 residues long: Snake venom metalloproteinase H2 (400 aa).

Residues 1–6 (FPYQGS) form the signal peptide. The propeptide occupies 7–176 (STILESGNVN…KKASQLIVST (170 aa)). The Peptidase M12B domain maps to 180-377 (RYMEIVIVVD…ENPPCILNKP (198 aa)). Ca(2+)-binding residues include glutamate 183 and aspartate 267. Cystine bridges form between cysteine 291–cysteine 372, cysteine 331–cysteine 356, and cysteine 333–cysteine 339. Histidine 316 contacts Zn(2+). Glutamate 317 is an active-site residue. Zn(2+) is bound by residues histidine 320 and histidine 326. The Ca(2+) site is built by cysteine 372, asparagine 375, valine 387, asparagine 390, leucine 392, glutamate 394, and aspartate 400. Positions 378-400 (LRTDTVSTPVSGNELLEAGKDYD) are excised as a propeptide.

It belongs to the venom metalloproteinase (M12B) family. P-I subfamily. Monomer. The cofactor is Zn(2+). Expressed by the venom gland.

It is found in the secreted. In terms of biological role, snake venom metalloproteinase that impairs hemostasis in the envenomed animal. This Deinagkistrodon acutus (Hundred-pace snake) protein is Snake venom metalloproteinase H2.